Consider the following 160-residue polypeptide: Ribosomal RNA large subunit methyltransferase H (160 aa).

S-adenosyl-L-methionine is bound by residues leucine 76 and glycine 108.

It belongs to the RNA methyltransferase RlmH family. In terms of assembly, homodimer.

It localises to the cytoplasm. The enzyme catalyses pseudouridine(1915) in 23S rRNA + S-adenosyl-L-methionine = N(3)-methylpseudouridine(1915) in 23S rRNA + S-adenosyl-L-homocysteine + H(+). Specifically methylates the pseudouridine at position 1915 (m3Psi1915) in 23S rRNA. This is Ribosomal RNA large subunit methyltransferase H from Nitrobacter hamburgensis (strain DSM 10229 / NCIMB 13809 / X14).